A 231-amino-acid polypeptide reads, in one-letter code: 7-cyano-7-deazaguanine synthase (231 aa).

8–18 serves as a coordination point for ATP; sequence FSGGQDSTTCL. Zn(2+) is bound by residues Cys188, Cys197, Cys200, and Cys203.

Belongs to the QueC family. It depends on Zn(2+) as a cofactor.

It catalyses the reaction 7-carboxy-7-deazaguanine + NH4(+) + ATP = 7-cyano-7-deazaguanine + ADP + phosphate + H2O + H(+). It participates in purine metabolism; 7-cyano-7-deazaguanine biosynthesis. Functionally, catalyzes the ATP-dependent conversion of 7-carboxy-7-deazaguanine (CDG) to 7-cyano-7-deazaguanine (preQ(0)). This chain is 7-cyano-7-deazaguanine synthase, found in Escherichia coli (strain SE11).